The sequence spans 437 residues: Glutamyl-tRNA reductase (437 aa).

Substrate-binding positions include 49–52, S109, 114–116, and Q120; these read TCNR and EGQ. The Nucleophile role is filled by C50. 198 to 203 contacts NADP(+); it reads GAGRMS.

This sequence belongs to the glutamyl-tRNA reductase family. In terms of assembly, homodimer.

The enzyme catalyses (S)-4-amino-5-oxopentanoate + tRNA(Glu) + NADP(+) = L-glutamyl-tRNA(Glu) + NADPH + H(+). It participates in porphyrin-containing compound metabolism; protoporphyrin-IX biosynthesis; 5-aminolevulinate from L-glutamyl-tRNA(Glu): step 1/2. It functions in the pathway porphyrin-containing compound metabolism; chlorophyll biosynthesis. Catalyzes the NADPH-dependent reduction of glutamyl-tRNA(Glu) to glutamate 1-semialdehyde (GSA). The polypeptide is Glutamyl-tRNA reductase (Synechococcus sp. (strain CC9311)).